The chain runs to 418 residues: Serine protease inhibitor A3K (418 aa).

Residues 1 to 21 (MAFIVAMGMILMAGICPAVLC) form the signal peptide. N39, N105, N185, and N270 each carry an N-linked (GlcNAc...) asparagine glycan. The segment at 369–394 (GTEAAAATGVIGGIRKAILPAVHFNR) is RCL.

This sequence belongs to the serpin family. Expressed in liver and secreted in plasma.

It localises to the secreted. Its function is as follows. Contrapsin inhibits trypsin-like proteases. The protein is Serine protease inhibitor A3K (Serpina3k) of Mus musculus (Mouse).